The primary structure comprises 404 residues: G1/S-specific cyclin-E2 (404 aa).

The tract at residues 1-44 (MSRRSSRLQAKQQPQPSQTESPQEAQIIQAKKRKTTQDVKKRRE) is disordered. Over residues 12–26 (QQPQPSQTESPQEAQ) the composition is skewed to low complexity. The residue at position 21 (S21) is a Phosphoserine. The span at 35–44 (TTQDVKKRRE) shows a compositional bias: basic and acidic residues. K348 bears the N6-lactoyllysine mark. S383 bears the Phosphoserine mark. At T392 the chain carries Phosphothreonine.

The protein belongs to the cyclin family. Cyclin E subfamily. As to quaternary structure, interacts with the CDK2 (in vivo) and CDK3 (in vitro) protein kinases to form a serine/threonine kinase holoenzyme complex. The cyclin subunit imparts substrate specificity to the complex. Post-translationally, phosphorylation by CDK2 triggers its release from CDK2 and degradation via the ubiquitin proteasome pathway. Lactylated at Lys-348. Delactylated by SIRT3. As to expression, according to PubMed:9858585, highest levels of expression in adult testis, thymus and brain. Lower levels in placenta, spleen and colon. Consistently elevated levels in tumor-derived cells compared to non-transformed proliferating cells. According to PubMed:9840927: low levels in thymus, prostate, brain, skeletal muscle, and kidney. Elevated levels in lung. According to PubMed:9840943 highly expressed in testis, placenta, thymus and brain. In a lesser extent in small intestine and colon.

Its subcellular location is the nucleus. Essential for the control of the cell cycle at the late G1 and early S phase. This is G1/S-specific cyclin-E2 (CCNE2) from Homo sapiens (Human).